The sequence spans 72 residues: Large ribosomal subunit protein uL29 (72 aa).

The protein belongs to the universal ribosomal protein uL29 family.

The sequence is that of Large ribosomal subunit protein uL29 from Prochlorococcus marinus (strain MIT 9301).